The chain runs to 788 residues: Phosphoribosylformylglycinamidine synthase subunit PurL (788 aa).

Residue His50 is part of the active site. The ATP site is built by Tyr53 and Lys92. Glu94 lines the Mg(2+) pocket. Substrate contacts are provided by residues 95 to 98 (SHNH) and Arg117. The Proton acceptor role is filled by His96. Asp118 contacts Mg(2+). A substrate-binding site is contributed by Gln241. Asp269 provides a ligand contact to Mg(2+). A substrate-binding site is contributed by 313–315 (ESQ). Asp524 and Gly561 together coordinate ATP. Residue Asn562 participates in Mg(2+) binding. Ser564 lines the substrate pocket.

This sequence belongs to the FGAMS family. In terms of assembly, monomer. Part of the FGAM synthase complex composed of 1 PurL, 1 PurQ and 2 PurS subunits.

The protein localises to the cytoplasm. The catalysed reaction is N(2)-formyl-N(1)-(5-phospho-beta-D-ribosyl)glycinamide + L-glutamine + ATP + H2O = 2-formamido-N(1)-(5-O-phospho-beta-D-ribosyl)acetamidine + L-glutamate + ADP + phosphate + H(+). It participates in purine metabolism; IMP biosynthesis via de novo pathway; 5-amino-1-(5-phospho-D-ribosyl)imidazole from N(2)-formyl-N(1)-(5-phospho-D-ribosyl)glycinamide: step 1/2. Its function is as follows. Part of the phosphoribosylformylglycinamidine synthase complex involved in the purines biosynthetic pathway. Catalyzes the ATP-dependent conversion of formylglycinamide ribonucleotide (FGAR) and glutamine to yield formylglycinamidine ribonucleotide (FGAM) and glutamate. The FGAM synthase complex is composed of three subunits. PurQ produces an ammonia molecule by converting glutamine to glutamate. PurL transfers the ammonia molecule to FGAR to form FGAM in an ATP-dependent manner. PurS interacts with PurQ and PurL and is thought to assist in the transfer of the ammonia molecule from PurQ to PurL. The protein is Phosphoribosylformylglycinamidine synthase subunit PurL of Nostoc punctiforme (strain ATCC 29133 / PCC 73102).